The chain runs to 183 residues: Myelin-associated oligodendrocyte basic protein (183 aa).

Residues 68-183 (TRTSRRAKSP…GSPVKASRFW (116 aa)) form a disordered region. A compositionally biased stretch (basic residues) spans 69–78 (RTSRRAKSPQ). The span at 79-96 (RPKQQPAAPPAVVRAPAK) shows a compositional bias: low complexity. Tandem repeats lie at residues 97 to 106 (PRSPPRSERQ), 107 to 116 (PRSPPRSERQ), 117 to 126 (PRSPPRSERQ), and 127 to 136 (PRSPPRSERQ). Positions 97–136 (PRSPPRSERQPRSPPRSERQPRSPPRSERQPRSPPRSERQ) are 4 X 10 AA tandem repeats of P-R-S-P-P-R-S-E-R-Q. Ser-99 and Ser-109 each carry phosphoserine. Residues 101-143 (PRSERQPRSPPRSERQPRSPPRSERQPRSPPRSERQPRPRPEV) are compositionally biased toward basic and acidic residues. A compositionally biased stretch (low complexity) spans 151 to 164 (RPPQKSKQQPRSSP).

It is found in the cytoplasm. The protein localises to the perinuclear region. Functionally, may play a role in compacting or stabilizing the myelin sheath, possibly by binding the negatively charged acidic phospholipids of the cytoplasmic membrane. This Homo sapiens (Human) protein is Myelin-associated oligodendrocyte basic protein (MOBP).